The following is a 246-amino-acid chain: Protein crossbronx (246 aa).

The 158-residue stretch at 20–177 (QQEYKILAEY…VQESILESKA (158 aa)) folds into the UBC core domain.

It belongs to the ubiquitin-conjugating enzyme family. FTS subfamily.

The sequence is that of Protein crossbronx (cbx) from Drosophila grimshawi (Hawaiian fruit fly).